Here is a 97-residue protein sequence, read N- to C-terminus: Putative septation protein SpoVG (97 aa).

This sequence belongs to the SpoVG family.

Its function is as follows. Essential for sporulation. Interferes with or is a negative regulator of the pathway leading to asymmetric septation. This Bacillus cytotoxicus (strain DSM 22905 / CIP 110041 / 391-98 / NVH 391-98) protein is Putative septation protein SpoVG.